The chain runs to 474 residues: Aspartyl/glutamyl-tRNA(Asn/Gln) amidotransferase subunit B (474 aa).

The protein belongs to the GatB/GatE family. GatB subfamily. As to quaternary structure, heterotrimer of A, B and C subunits.

The catalysed reaction is L-glutamyl-tRNA(Gln) + L-glutamine + ATP + H2O = L-glutaminyl-tRNA(Gln) + L-glutamate + ADP + phosphate + H(+). The enzyme catalyses L-aspartyl-tRNA(Asn) + L-glutamine + ATP + H2O = L-asparaginyl-tRNA(Asn) + L-glutamate + ADP + phosphate + 2 H(+). Functionally, allows the formation of correctly charged Asn-tRNA(Asn) or Gln-tRNA(Gln) through the transamidation of misacylated Asp-tRNA(Asn) or Glu-tRNA(Gln) in organisms which lack either or both of asparaginyl-tRNA or glutaminyl-tRNA synthetases. The reaction takes place in the presence of glutamine and ATP through an activated phospho-Asp-tRNA(Asn) or phospho-Glu-tRNA(Gln). The chain is Aspartyl/glutamyl-tRNA(Asn/Gln) amidotransferase subunit B from Methanospirillum hungatei JF-1 (strain ATCC 27890 / DSM 864 / NBRC 100397 / JF-1).